Here is a 311-residue protein sequence, read N- to C-terminus: HPr kinase/phosphorylase (311 aa).

Catalysis depends on residues His-138 and Lys-159. 153 to 160 (GKSGVGKS) contacts ATP. Ser-160 is a Mg(2+) binding site. Asp-177 serves as the catalytic Proton acceptor; for phosphorylation activity. Proton donor; for dephosphorylation activity. Residues 201 to 210 (LEIRGLGIIN) are important for the catalytic mechanism of both phosphorylation and dephosphorylation. Position 202 (Glu-202) interacts with Mg(2+). The active site involves Arg-243. Positions 264 to 269 (PVRPGR) are important for the catalytic mechanism of dephosphorylation.

Belongs to the HPrK/P family. In terms of assembly, homohexamer. The cofactor is Mg(2+).

It catalyses the reaction [HPr protein]-L-serine + ATP = [HPr protein]-O-phospho-L-serine + ADP + H(+). The catalysed reaction is [HPr protein]-O-phospho-L-serine + phosphate + H(+) = [HPr protein]-L-serine + diphosphate. Functionally, catalyzes the ATP- as well as the pyrophosphate-dependent phosphorylation of a specific serine residue in HPr, a phosphocarrier protein of the phosphoenolpyruvate-dependent sugar phosphotransferase system (PTS). HprK/P also catalyzes the pyrophosphate-producing, inorganic phosphate-dependent dephosphorylation (phosphorolysis) of seryl-phosphorylated HPr (P-Ser-HPr). The two antagonistic activities of HprK/P are regulated by several intracellular metabolites, which change their concentration in response to the absence or presence of rapidly metabolisable carbon sources (glucose, fructose, etc.) in the growth medium. Also phosphorylates/dephosphorylates the HPr-like catabolite repression protein crh on a specific serine residue. Therefore, by controlling the phosphorylation state of HPr and crh, HPrK/P is a sensor enzyme that plays a major role in the regulation of carbon metabolism and sugar transport: it mediates carbon catabolite repression (CCR), and regulates PTS-catalyzed carbohydrate uptake and inducer exclusion. This is HPr kinase/phosphorylase from Geobacillus kaustophilus (strain HTA426).